Here is a 24-residue protein sequence, read N- to C-terminus: Hemocyanin subunit 4e (24 aa).

The protein belongs to the tyrosinase family. Hemocyanin subfamily. Hemolymph.

It localises to the secreted. It is found in the extracellular space. Hemocyanins are copper-containing oxygen carriers occurring freely dissolved in the hemolymph of many mollusks and arthropods. The polypeptide is Hemocyanin subunit 4e (Maja squinado (Mediterranean spider crab)).